The sequence spans 136 residues: Protein scalloped (136 aa).

The protein localises to the nucleus. Probable transcription factor that function in the regulation of cell-specific gene expression during drosophila development, particularly in the differentiation of the nervous system. This is Protein scalloped (SD) from Junonia coenia (Peacock butterfly).